Here is a 169-residue protein sequence, read N- to C-terminus: CRISPR system Cmr subunit Cmr5 (169 aa).

This sequence belongs to the CRISPR system Cmr5 family. Monomer in isolation. Part of the type III-B Cmr ribonucleoprotein (RNP) complex, an elongated RNP with Cmr2 and Cmr3 as the base, with Cmr4 and Cmr5 forming a helical core along the mature crRNA (39 or 45 nt in length), while the complex is capped by Cmr6 and Cmr1. The 5' end of the crRNA is bound to Cmr2 and Cmr3, while Cmr6 and a Cmr1 subunit (Cmr1-1 or Cmr1-2) cap the 3' end of the crRNA. The target RNA lies antiparallel to the crRNA, with its 5' end near Cmr1 and Cmr6 and its 3' end near Cmr2 and Cmr3; major target cleavage occurs nears the junction of Cmr1/Cmr6 and Cmr4/Cmr, with minor cleavage occurring at 6 nt intervals which coincide with the proposed spacing of Cmr4 subunits. Interacts with Cmr4. Interacts with Cmr2, Cmr4 and Cmr6.

It localises to the cytoplasm. In terms of biological role, CRISPR (clustered regularly interspaced short palindromic repeat), is an adaptive immune system that provides protection against mobile genetic elements (viruses, transposable elements and conjugative plasmids). CRISPR clusters contain sequences complementary to antecedent mobile elements and target invading nucleic acids. CRISPR clusters are transcribed and processed into CRISPR RNA (crRNA), formerly called psiRNA (prokaryotic silencing) in this organism. Part of the Cmr ribonucleoprotein complex which has divalent cation-dependent endoribonuclease activity specific for ssRNA complementary to the crRNA (target NRA), generating 5' hydroxy- and 3' phosphate or 2'-3' cyclic phosphate termini. Cmr4 is probably the subunit that cleaves target RNA. Cmr complex does not cleave ssDNA complementary to the crRNA. Cleavage of invading RNA is guided by the crRNA; substrate cleavage occurs a fixed distance (14 nt) from the 3' end of the crRNA. In vitro reconstitution shows Cmr1-2 and Cmr5 are not absolutely necessary for target cleavage. This is CRISPR system Cmr subunit Cmr5 from Pyrococcus furiosus (strain ATCC 43587 / DSM 3638 / JCM 8422 / Vc1).